We begin with the raw amino-acid sequence, 164 residues long: Rhomboid-related protein 1 (164 aa).

4 consecutive transmembrane segments (helical) span residues glycine 10–leucine 30, isoleucine 32–methionine 52, valine 56–methionine 76, and proline 120–leucine 140. Serine 60 functions as the Nucleophile in the catalytic mechanism. The active site involves histidine 125.

The protein belongs to the peptidase S54 family.

It is found in the membrane. It catalyses the reaction Cleaves type-1 transmembrane domains using a catalytic dyad composed of serine and histidine that are contributed by different transmembrane domains.. May be involved in regulated intramembrane proteolysis and the subsequent release of functional polypeptides from their membrane anchors. This Rattus norvegicus (Rat) protein is Rhomboid-related protein 1 (Rhbdl1).